We begin with the raw amino-acid sequence, 118 residues long: Large ribosomal subunit protein bL19 (118 aa).

This sequence belongs to the bacterial ribosomal protein bL19 family.

In terms of biological role, this protein is located at the 30S-50S ribosomal subunit interface and may play a role in the structure and function of the aminoacyl-tRNA binding site. The protein is Large ribosomal subunit protein bL19 of Campylobacter concisus (strain 13826).